The primary structure comprises 648 residues: Macrolide export ATP-binding/permease protein MacB (648 aa).

Residues 5 to 243 enclose the ABC transporter domain; sequence LELKDIRRSY…AGGTEPVVNT (239 aa). Position 41–48 (41–48) interacts with ATP; it reads GASGSGKS. 4 helical membrane-spanning segments follow: residues 273–293, 523–543, 576–596, and 611–631; these read LLTM…VVVG, LFMT…VMNI, AVLV…LIAF, and PLAL…FGWL.

This sequence belongs to the ABC transporter superfamily. Macrolide exporter (TC 3.A.1.122) family. In terms of assembly, homodimer. Part of the tripartite efflux system MacAB-TolC, which is composed of an inner membrane transporter, MacB, a periplasmic membrane fusion protein, MacA, and an outer membrane component, TolC. The complex forms a large protein conduit and can translocate molecules across both the inner and outer membranes. Interacts with MacA.

It is found in the cell inner membrane. Its function is as follows. Part of the tripartite efflux system MacAB-TolC. MacB is a non-canonical ABC transporter that contains transmembrane domains (TMD), which form a pore in the inner membrane, and an ATP-binding domain (NBD), which is responsible for energy generation. Confers resistance against macrolides. This chain is Macrolide export ATP-binding/permease protein MacB, found in Escherichia coli O157:H7.